The primary structure comprises 321 residues: Opticin (321 aa).

The first 19 residues, 1–19, serve as a signal peptide directing secretion; sequence MKLLALLSLLILMLQEART. Sulfotyrosine is present on Tyr-61. The LRRNT domain occupies 105–142; the sequence is LLAAPANHGLPTCLICVCLGSSVYCDDADLENIPPLPQ. LRR repeat units lie at residues 143-164, 167-188, 191-212, 237-258, 259-279, and 289-309; these read TTAY…DFKG, KLKR…ALRL, ALRD…PTSI, KLQF…LPLS, LRSL…AFCD, and PLED…PSAY. Cys-278 and Cys-311 are oxidised to a cystine. Asn-301 carries an N-linked (GlcNAc...) asparagine glycan.

The protein belongs to the small leucine-rich proteoglycan (SLRP) family. SLRP class III subfamily. In terms of assembly, homodimer. O-glycosylated (sialylated oligosaccharides). In terms of processing, sulfated on tyrosine residues. Post-translationally, proteolytically cleaved by MMP1, MMP2, MMP3, MMP7, MMP8, MMP9, ADAMTS4, and ADAMTS5. Proteolytically cleaved by MMP13.

The protein resides in the secreted. The protein localises to the extracellular space. It localises to the extracellular matrix. Its function is as follows. Inhibits angiogenesis in the vitreous humor of the eye, and therefore represses neovascularization. Binds collagen fibrils. May be involved in collagen fiber organization via regulation of other members of the small leucine-rich repeat proteoglycan superfamily. This chain is Opticin (OPTC), found in Bos taurus (Bovine).